Reading from the N-terminus, the 503-residue chain is Probable DNA ligase (503 aa).

Glu210 is a binding site for ATP. Lys212 serves as the catalytic N6-AMP-lysine intermediate. Positions 217, 232, 261, 296, 367, and 373 each coordinate ATP.

This sequence belongs to the ATP-dependent DNA ligase family. The cofactor is Mg(2+).

It carries out the reaction ATP + (deoxyribonucleotide)n-3'-hydroxyl + 5'-phospho-(deoxyribonucleotide)m = (deoxyribonucleotide)n+m + AMP + diphosphate.. Its function is as follows. DNA ligase that seals nicks in double-stranded DNA during DNA replication, DNA recombination and DNA repair. The protein is Probable DNA ligase of Rhodococcus opacus (strain B4).